The following is a 1277-amino-acid chain: Y' element ATP-dependent helicase YEL077C (1277 aa).

Residues 222–399 (EIYMADTPSV…LQRIGLTGLA (178 aa)) form the Helicase ATP-binding domain. 235–242 (APPGYGKT) contacts ATP. The DEAH box motif lies at 345 to 348 (DEFH). The Helicase C-terminal domain maps to 454–605 (ALKLLLALFE…EFYGLESKKG (152 aa)). 2 disordered regions span residues 696-763 (NVRT…NATT) and 775-895 (TTKS…NRFH). Residues 775-878 (TTKSINSSTN…ATTTESTNAS (104 aa)) show a composition bias toward low complexity. A compositionally biased stretch (basic and acidic residues) spans 879–895 (AKEDANKDGNAEDNRFH).

The protein belongs to the helicase family. Yeast subtelomeric Y' repeat subfamily.

In terms of biological role, catalyzes DNA unwinding and is involved in telomerase-independent telomere maintenance. This is Y' element ATP-dependent helicase YEL077C from Saccharomyces cerevisiae (strain ATCC 204508 / S288c) (Baker's yeast).